We begin with the raw amino-acid sequence, 207 residues long: ATP phosphoribosyltransferase (207 aa).

It belongs to the ATP phosphoribosyltransferase family. Short subfamily. In terms of assembly, heteromultimer composed of HisG and HisZ subunits.

It localises to the cytoplasm. It carries out the reaction 1-(5-phospho-beta-D-ribosyl)-ATP + diphosphate = 5-phospho-alpha-D-ribose 1-diphosphate + ATP. The protein operates within amino-acid biosynthesis; L-histidine biosynthesis; L-histidine from 5-phospho-alpha-D-ribose 1-diphosphate: step 1/9. In terms of biological role, catalyzes the condensation of ATP and 5-phosphoribose 1-diphosphate to form N'-(5'-phosphoribosyl)-ATP (PR-ATP). Has a crucial role in the pathway because the rate of histidine biosynthesis seems to be controlled primarily by regulation of HisG enzymatic activity. The chain is ATP phosphoribosyltransferase (hisG) from Dictyoglomus turgidum (strain DSM 6724 / Z-1310).